We begin with the raw amino-acid sequence, 247 residues long: Carboxy-S-adenosyl-L-methionine synthase (247 aa).

S-adenosyl-L-methionine-binding positions include Y40, 65–67 (GCS), 90–91 (DN), 122–123 (DI), N137, and R204.

The protein belongs to the class I-like SAM-binding methyltransferase superfamily. Cx-SAM synthase family. As to quaternary structure, homodimer.

It catalyses the reaction prephenate + S-adenosyl-L-methionine = carboxy-S-adenosyl-L-methionine + 3-phenylpyruvate + H2O. In terms of biological role, catalyzes the conversion of S-adenosyl-L-methionine (SAM) to carboxy-S-adenosyl-L-methionine (Cx-SAM). In Stutzerimonas stutzeri (strain A1501) (Pseudomonas stutzeri), this protein is Carboxy-S-adenosyl-L-methionine synthase.